Here is a 162-residue protein sequence, read N- to C-terminus: Ubiquitin-fold modifier-conjugating enzyme 1 (162 aa).

The active-site Glycyl thioester intermediate is cysteine 115.

This sequence belongs to the ubiquitin-conjugating enzyme family. UFC1 subfamily. As to quaternary structure, interacts with uba-5.

Its function is as follows. E2-like enzyme which forms an intermediate with ufm-1. The intermediate is formed via a thioester linkage. The protein is Ubiquitin-fold modifier-conjugating enzyme 1 of Caenorhabditis briggsae.